A 353-amino-acid polypeptide reads, in one-letter code: Holliday junction branch migration complex subunit RuvB (353 aa).

Residues 1–182 are large ATPase domain (RuvB-L); it reads MPERLITPKG…FGIVQRLEFY (182 aa). ATP-binding positions include isoleucine 21, arginine 22, glycine 63, lysine 66, threonine 67, threonine 68, 129–131, arginine 172, tyrosine 182, and arginine 219; that span reads EDF. Threonine 67 provides a ligand contact to Mg(2+). A small ATPAse domain (RuvB-S) region spans residues 183 to 253; it reads NVQDLTRIVQ…VADRALDLLD (71 aa). Residues 256–353 form a head domain (RuvB-H) region; sequence VQGFDAQDRR…QEEGGGEGKL (98 aa). Arginine 292, arginine 311, and arginine 316 together coordinate DNA.

Belongs to the RuvB family. As to quaternary structure, homohexamer. Forms an RuvA(8)-RuvB(12)-Holliday junction (HJ) complex. HJ DNA is sandwiched between 2 RuvA tetramers; dsDNA enters through RuvA and exits via RuvB. An RuvB hexamer assembles on each DNA strand where it exits the tetramer. Each RuvB hexamer is contacted by two RuvA subunits (via domain III) on 2 adjacent RuvB subunits; this complex drives branch migration. In the full resolvosome a probable DNA-RuvA(4)-RuvB(12)-RuvC(2) complex forms which resolves the HJ.

The protein resides in the cytoplasm. It carries out the reaction ATP + H2O = ADP + phosphate + H(+). In terms of biological role, the RuvA-RuvB-RuvC complex processes Holliday junction (HJ) DNA during genetic recombination and DNA repair, while the RuvA-RuvB complex plays an important role in the rescue of blocked DNA replication forks via replication fork reversal (RFR). RuvA specifically binds to HJ cruciform DNA, conferring on it an open structure. The RuvB hexamer acts as an ATP-dependent pump, pulling dsDNA into and through the RuvAB complex. RuvB forms 2 homohexamers on either side of HJ DNA bound by 1 or 2 RuvA tetramers; 4 subunits per hexamer contact DNA at a time. Coordinated motions by a converter formed by DNA-disengaged RuvB subunits stimulates ATP hydrolysis and nucleotide exchange. Immobilization of the converter enables RuvB to convert the ATP-contained energy into a lever motion, pulling 2 nucleotides of DNA out of the RuvA tetramer per ATP hydrolyzed, thus driving DNA branch migration. The RuvB motors rotate together with the DNA substrate, which together with the progressing nucleotide cycle form the mechanistic basis for DNA recombination by continuous HJ branch migration. Branch migration allows RuvC to scan DNA until it finds its consensus sequence, where it cleaves and resolves cruciform DNA. This chain is Holliday junction branch migration complex subunit RuvB, found in Thioalkalivibrio sulfidiphilus (strain HL-EbGR7).